Consider the following 481-residue polypeptide: Guanine nucleotide exchange factor C9orf72 homolog (481 aa).

A uDENN C9ORF72-type domain is found at 23-194; sequence SPLLAATFAY…ELLASMKSHS (172 aa). Residues 200 to 343 enclose the cDENN C9ORF72-type domain; sequence DIADTVLNDD…SELTAFWRAT (144 aa). The region spanning 370-464 is the dDENN C9ORF72-type domain; that stretch reads VLHRDTLVKA…IKPGLHSFIF (95 aa). Residues 461-481 form a required for the homodimerization of the C9orf72-SMCR8 complex region; the sequence is SFIFGRPFYTSVQERDVLMTF.

In terms of assembly, component of the C9orf72-SMCR8 complex, at least composed of C9orf72, SMCR8 and WDR41. The complex is formed of two protomers, each individually consisting of one molecule each of C9orf72, SMCR8 and WDR41. The protomers homodimerize via an interaction between C9orf72 (via C-terminus) and SMCR8 (via N-terminus). Within each protomer SMCR8 (via DENN domain) acts as a bridging protein between WDR41 (via C-terminus and N-terminus) and C9orf72 (via C-terminus). The C9orf72-SMCR8 complex associates with the ULK1/ATG1 kinase complex. Interacts with ULK1/ATG1 kinase complex members ULK1, ATG13 and RB1CC1. Interacts with SMCR8; the interaction is direct. Interacts with HNRNPA1, HNRNPA2B1 and UBQLN2. Interacts with small Rab GTPase RAB1A; the interaction mediates recruitment of RAB1A to the ULK1/ATG1 kinase complex. Also interacts with small Rab GTPase RAB7A. Interacts with cofilin. Interacts with GTP-binding proteins ARF1 and ARF6. Interacts with the DLG4/PSD-95. Interacts with CARM1 (via PH domain-like fold). Interacts with RAB39A and RAB39B (in GDP-bound forms); functions as GEF for RAB39A and RAB39B. Expressed in postnatal cerebellum and cortex (at protein level). Neuronal expression is detected in several regions of the adult brain and spinal cord. Prominent expression also observed in embryonic and early postnatal neurons including retinal ganglion cells, sensory neurons in the olfactory epithelium and in dorsal root ganglia, and spinal motor neurons. Expressed in the developing cerebral cortex, cerebellum, olfactory bulb, hippocampus and spinal cord in the embryo and in P0 cortical neurons and astrocytes. Also expressed in non-neuronal tissues such as kidney and tooth. In the spleen, highly expressed in myeloid cells compared to B cell and T cell populations where expression is much lower. In the brain, highly expressed in microglia. As to expression, expressed in the forebrain, including in the glomerular layer of the olfactory bulb (at protein level).

The protein resides in the nucleus. It localises to the cytoplasm. It is found in the P-body. Its subcellular location is the stress granule. The protein localises to the endosome. The protein resides in the lysosome. It localises to the cytoplasmic vesicle. It is found in the autophagosome. Its subcellular location is the autolysosome. The protein localises to the secreted. The protein resides in the cell projection. It localises to the axon. It is found in the growth cone. Its subcellular location is the perikaryon. The protein localises to the dendrite. The protein resides in the presynapse. It localises to the postsynapse. In terms of biological role, acts as a guanine-nucleotide releasing factor (GEF) for Rab GTPases by promoting the conversion of inactive RAB-GDP to the active form RAB-GTP. Acts as a GEF for RAB39A which enables HOPS-mediated autophagosome-lysosome membrane tethering and fusion in mammalian autophagy. Component of the C9orf72-SMCR8 complex where both subunits display GEF activity and that regulates autophagy. As part of the C9orf72-SMCR8-WDR41 (CSW) complex, functions as GEF for RAB8A, and RAB39B, thereby promoting autophagosome maturation. As part of the C9orf72-SMCR8 complex, also functions as GTPase activating protein (GAP) for RAB8A and RAB11A in vitro. The C9orf72-SMCR8 complex also acts as a regulator of autophagy initiation by interacting with the ULK1/ATG1 kinase complex and modulating its protein kinase activity. Promotes initiation of autophagy by regulating the RAB1A-dependent trafficking of the ULK1/ATG1 kinase complex to the phagophore which leads to autophagosome formation. Acts as a regulator of mTORC1 signaling by promoting phosphorylation of mTORC1 substrates. Plays a role in endosomal trafficking. May be involved in regulating the maturation of phagosomes to lysosomes. Promotes the lysosomal localization and lysosome-mediated degradation of CARM1 which leads to inhibition of starvation-induced lipid metabolism. Regulates actin dynamics in motor neurons by inhibiting the GTP-binding activity of ARF6, leading to ARF6 inactivation. This reduces the activity of the LIMK1 and LIMK2 kinases which are responsible for phosphorylation and inactivation of CFL1/cofilin, leading to cofilin activation. Positively regulates axon extension and axon growth cone size in spinal motor neurons. Required for SMCR8 protein expression and localization at pre- and post-synaptic compartments in the forebrain, also regulates protein abundance of RAB3A and GRIA1/GLUR1 in post-synaptic compartments in the forebrain and hippocampus. Plays a role within the hematopoietic system in restricting inflammation and the development of autoimmunity. The sequence is that of Guanine nucleotide exchange factor C9orf72 homolog from Mus musculus (Mouse).